Consider the following 827-residue polypeptide: Protein SEY1 (827 aa).

Positions 1–26 (MSQSSPSNAETDEDLSTTSSSSSFVP) are disordered. Residues 1 to 719 (MSQSSPSNAE…KRSIVQHVTQ (719 aa)) lie on the Cytoplasmic side of the membrane. A GB1/RHD3-type G domain is found at 63 to 291 (GNNYHIISVF…VKKDLFRPNY (229 aa)). 73 to 80 (GSQSTGKS) is a GTP binding site. Coiled coils occupy residues 389–409 (KSVY…KFRE) and 472–492 (VSNL…VELK). Residues 720 to 740 (IPYYIYLVIMVLGWNEFMAIV) traverse the membrane as a helical segment. At 741–743 (RNP) the chain is on the lumenal side. Residues 744–764 (LFFSLVLVFGAGLYILYSMNL) traverse the membrane as a helical segment. Residues 765 to 827 (LKPAMVVVQR…VVETIEMQDL (63 aa)) are Cytoplasmic-facing. Residues 803 to 823 (QKISASNREKVEEEKVVETIE) are a coiled coil.

This sequence belongs to the TRAFAC class dynamin-like GTPase superfamily. GB1/RHD3 GTPase family. RHD3 subfamily.

Its subcellular location is the endoplasmic reticulum membrane. Functionally, cooperates with the reticulon proteins and tubule-shaping DP1 family proteins to generate and maintain the structure of the tubular endoplasmic reticulum network. Has GTPase activity, which is required for its function in ER organization. The chain is Protein SEY1 from Scheffersomyces stipitis (strain ATCC 58785 / CBS 6054 / NBRC 10063 / NRRL Y-11545) (Yeast).